The sequence spans 635 residues: 1-deoxy-D-xylulose-5-phosphate synthase (635 aa).

Residues His-72 and 113–115 (GHA) contribute to the thiamine diphosphate site. Asp-144 is a Mg(2+) binding site. Thiamine diphosphate-binding positions include 145 to 146 (GA), Asn-174, Tyr-286, and Glu-369. Residue Asn-174 coordinates Mg(2+).

It belongs to the transketolase family. DXPS subfamily. In terms of assembly, homodimer. Mg(2+) serves as cofactor. The cofactor is thiamine diphosphate.

It carries out the reaction D-glyceraldehyde 3-phosphate + pyruvate + H(+) = 1-deoxy-D-xylulose 5-phosphate + CO2. It participates in metabolic intermediate biosynthesis; 1-deoxy-D-xylulose 5-phosphate biosynthesis; 1-deoxy-D-xylulose 5-phosphate from D-glyceraldehyde 3-phosphate and pyruvate: step 1/1. Functionally, catalyzes the acyloin condensation reaction between C atoms 2 and 3 of pyruvate and glyceraldehyde 3-phosphate to yield 1-deoxy-D-xylulose-5-phosphate (DXP). In Acaryochloris marina (strain MBIC 11017), this protein is 1-deoxy-D-xylulose-5-phosphate synthase.